The sequence spans 166 residues: Peptide deformylase (166 aa).

Residues Cys88 and His130 each contribute to the Fe cation site. Glu131 is an active-site residue. His134 is a binding site for Fe cation.

This sequence belongs to the polypeptide deformylase family. Requires Fe(2+) as cofactor.

It catalyses the reaction N-terminal N-formyl-L-methionyl-[peptide] + H2O = N-terminal L-methionyl-[peptide] + formate. In terms of biological role, removes the formyl group from the N-terminal Met of newly synthesized proteins. Requires at least a dipeptide for an efficient rate of reaction. N-terminal L-methionine is a prerequisite for activity but the enzyme has broad specificity at other positions. The chain is Peptide deformylase from Thermoanaerobacter sp. (strain X514).